A 252-amino-acid chain; its full sequence is 14-3-3 protein 7 (252 aa).

The protein belongs to the 14-3-3 family. Homodimer.

The sequence is that of 14-3-3 protein 7 (TFT7) from Solanum lycopersicum (Tomato).